We begin with the raw amino-acid sequence, 367 residues long: Porin Omp2a (367 aa).

The first 22 residues, 1–22 (MNIKSLLLGSAAALVAASGAQA), serve as a signal peptide directing secretion.

This sequence belongs to the alphaproteobacteria porin family. As to quaternary structure, monomer.

The protein localises to the cell outer membrane. Its function is as follows. Forms passive diffusion pores that allow small molecular weight hydrophilic materials across the outer membrane. The protein is Porin Omp2a (omp2a) of Brucella melitensis biotype 1 (strain ATCC 23456 / CCUG 17765 / NCTC 10094 / 16M).